A 456-amino-acid chain; its full sequence is Bifunctional protein GlmU (456 aa).

A pyrophosphorylase region spans residues 1-228; sequence MKLKAIILAA…YEDIMAVNSR (228 aa). UDP-N-acetyl-alpha-D-glucosamine-binding positions include 8–11, Lys-22, Gln-72, 77–78, 99–101, Gly-138, Glu-153, Asn-168, and Asn-226; these read LAAG, GT, and YGD. Position 101 (Asp-101) interacts with Mg(2+). Asn-226 lines the Mg(2+) pocket. A linker region spans residues 229-249; sequence EQLAEVEEVMQRRIVKKHMEA. Residues 250 to 456 are N-acetyltransferase; the sequence is GVTFIDPQST…WVARKGVGKK (207 aa). 2 residues coordinate UDP-N-acetyl-alpha-D-glucosamine: Arg-331 and Lys-349. Residue His-361 is the Proton acceptor of the active site. 2 residues coordinate UDP-N-acetyl-alpha-D-glucosamine: Tyr-364 and Asn-375. Residues 384–385, Ser-403, Ser-421, and Arg-438 contribute to the acetyl-CoA site; that span reads NY.

It in the N-terminal section; belongs to the N-acetylglucosamine-1-phosphate uridyltransferase family. The protein in the C-terminal section; belongs to the transferase hexapeptide repeat family. In terms of assembly, homotrimer. Mg(2+) is required as a cofactor.

The protein resides in the cytoplasm. It catalyses the reaction alpha-D-glucosamine 1-phosphate + acetyl-CoA = N-acetyl-alpha-D-glucosamine 1-phosphate + CoA + H(+). The catalysed reaction is N-acetyl-alpha-D-glucosamine 1-phosphate + UTP + H(+) = UDP-N-acetyl-alpha-D-glucosamine + diphosphate. It participates in nucleotide-sugar biosynthesis; UDP-N-acetyl-alpha-D-glucosamine biosynthesis; N-acetyl-alpha-D-glucosamine 1-phosphate from alpha-D-glucosamine 6-phosphate (route II): step 2/2. Its pathway is nucleotide-sugar biosynthesis; UDP-N-acetyl-alpha-D-glucosamine biosynthesis; UDP-N-acetyl-alpha-D-glucosamine from N-acetyl-alpha-D-glucosamine 1-phosphate: step 1/1. It functions in the pathway bacterial outer membrane biogenesis; LPS lipid A biosynthesis. Functionally, catalyzes the last two sequential reactions in the de novo biosynthetic pathway for UDP-N-acetylglucosamine (UDP-GlcNAc). The C-terminal domain catalyzes the transfer of acetyl group from acetyl coenzyme A to glucosamine-1-phosphate (GlcN-1-P) to produce N-acetylglucosamine-1-phosphate (GlcNAc-1-P), which is converted into UDP-GlcNAc by the transfer of uridine 5-monophosphate (from uridine 5-triphosphate), a reaction catalyzed by the N-terminal domain. The sequence is that of Bifunctional protein GlmU from Alkaliphilus metalliredigens (strain QYMF).